We begin with the raw amino-acid sequence, 355 residues long: Peptide chain release factor 1 (355 aa).

Position 231 is an N5-methylglutamine (glutamine 231). Residues 280-291 (SERLAKESEARK) show a composition bias toward basic and acidic residues. Positions 280–303 (SERLAKESEARKSQVGSGDRSERI) are disordered.

This sequence belongs to the prokaryotic/mitochondrial release factor family. Post-translationally, methylated by PrmC. Methylation increases the termination efficiency of RF1.

The protein localises to the cytoplasm. In terms of biological role, peptide chain release factor 1 directs the termination of translation in response to the peptide chain termination codons UAG and UAA. This is Peptide chain release factor 1 from Campylobacter jejuni (strain RM1221).